A 184-amino-acid polypeptide reads, in one-letter code: Photosystem I assembly protein Ycf4 (184 aa).

Helical transmembrane passes span 22-42 and 57-77; these read FCWA…GTSS and IIFF…LFIS.

It belongs to the Ycf4 family.

The protein resides in the plastid. Its subcellular location is the chloroplast thylakoid membrane. Its function is as follows. Seems to be required for the assembly of the photosystem I complex. This chain is Photosystem I assembly protein Ycf4, found in Crucihimalaya wallichii (Rock-cress).